Consider the following 99-residue polypeptide: C-C motif chemokine 17 (99 aa).

Positions 1 to 23 (MMSLKLLLLVMLLLGASLQVTHA) are cleaved as a signal peptide. 2 disulfide bridges follow: Cys33-Cys57 and Cys34-Cys73.

This sequence belongs to the intercrine beta (chemokine CC) family. Expressed in thymus and also in spleen, lung, lymph node, kidney, small intestine, colon and skin.

It is found in the secreted. Its function is as follows. Chemokine, which displays chemotactic activity for T lymphocytes, preferentially Th2 cells, but not monocytes or granulocytes. Therefore plays an important role in a wide range of inflammatory and immunological processes. Acts by binding to CCR4 at T-cell surface. Mediates GM-CSF/CSF2-driven pain and inflammation. In the brain, required to maintain the typical, highly branched morphology of hippocampal microglia under homeostatic conditions. May be important for the appropriate adaptation of microglial morphology and synaptic plasticity to acute lipopolysaccharide (LPS)-induced neuroinflammation. Plays a role in wound healing, mainly by inducing fibroblast migration into the wound. The sequence is that of C-C motif chemokine 17 (CCL17) from Felis catus (Cat).